Consider the following 569-residue polypeptide: MNQATPTKHVFVTGGVASSLGKGLTASSLGSLLRSRGLRVTMQKLDPYLNVDPGTMNPFQHGEVFVTNDGAETDLDIGHYERFLDTDLSQIANVTTGQVYSSVIAKERRGDYLGDTVQVIPHITNEIKERILAMGGTGEDGRSVDVVITEVGGTVGDIESLPFLEAARQVRHDIGRENCFFLHVSLVPYIGPSGELKTKPTQHSVAALRQVGIQPDAVVCRADRELPPSIKKKISLMCDVDQDAVVTCADAPSIYDIPKVLHREGLDAYLVRRLDLPFRDVDWTVWDDLLRRVHHPKEEVTVALVGKYVDLPDAYLSVAEALRAGGFAHEAKVQLRWVASDECQTAAGAARNLQDVDAICVPGGFGVRGIEGKLGALTYARTHGIPTLGLCLGLQCMVIEYARNVVGLEKAGSTEFDPDTPEPVIATMAEQKAFVEGAGDLGGTMRLGLYPAALKDGSIAREVYGSSLIEERHRHRYEVNNAYRDQLEEAGLVFSGTSPDNSLVEYVELPRDTHPYYISTQAHPELRSRPTRPHPLFAGLVGAAIERQRELRFPIDETGLRREPEPDED.

Residues 1-276 form an amidoligase domain region; sequence MNQATPTKHV…DAYLVRRLDL (276 aa). Serine 18 provides a ligand contact to CTP. A UTP-binding site is contributed by serine 18. ATP-binding positions include 19-24 and aspartate 76; that span reads SLGKGL. Residues aspartate 76 and glutamate 150 each contribute to the Mg(2+) site. Residues 157–159, 197–202, and lysine 233 contribute to the CTP site; these read DIE and KTKPTQ. UTP contacts are provided by residues 197–202 and lysine 233; that span reads KTKPTQ. Residues 301–550 enclose the Glutamine amidotransferase type-1 domain; that stretch reads TVALVGKYVD…VGAAIERQRE (250 aa). Glycine 364 contributes to the L-glutamine binding site. Catalysis depends on cysteine 391, which acts as the Nucleophile; for glutamine hydrolysis. L-glutamine is bound by residues 392–395, glutamate 415, and arginine 476; that span reads LGLQ. Residues histidine 523 and glutamate 525 contribute to the active site.

It belongs to the CTP synthase family. Homotetramer.

It carries out the reaction UTP + L-glutamine + ATP + H2O = CTP + L-glutamate + ADP + phosphate + 2 H(+). The enzyme catalyses L-glutamine + H2O = L-glutamate + NH4(+). It catalyses the reaction UTP + NH4(+) + ATP = CTP + ADP + phosphate + 2 H(+). Its pathway is pyrimidine metabolism; CTP biosynthesis via de novo pathway; CTP from UDP: step 2/2. Allosterically activated by GTP, when glutamine is the substrate; GTP has no effect on the reaction when ammonia is the substrate. The allosteric effector GTP functions by stabilizing the protein conformation that binds the tetrahedral intermediate(s) formed during glutamine hydrolysis. Inhibited by the product CTP, via allosteric rather than competitive inhibition. Catalyzes the ATP-dependent amination of UTP to CTP with either L-glutamine or ammonia as the source of nitrogen. Regulates intracellular CTP levels through interactions with the four ribonucleotide triphosphates. In Nocardioides sp. (strain ATCC BAA-499 / JS614), this protein is CTP synthase.